The chain runs to 387 residues: Testis-expressed protein 9 (387 aa).

Disordered stretches follow at residues 1–25 (MAGR…LAAG) and 58–133 (REQQ…LKYP). Polar residues-rich tracts occupy residues 70-91 (ALTT…SSEG) and 103-115 (KNTG…QNRL). The stretch at 184–347 (IGTEAQIRFL…ERQKGELMIG (164 aa)) forms a coiled coil.

Testis-specific.

It localises to the cytoplasm. The protein localises to the cytoskeleton. The protein resides in the microtubule organizing center. It is found in the centrosome. Its subcellular location is the centriolar satellite. This chain is Testis-expressed protein 9 (Tex9), found in Mus musculus (Mouse).